The following is a 326-amino-acid chain: Tetraacyldisaccharide 4'-kinase (326 aa).

An ATP-binding site is contributed by 52–59; the sequence is TLGGAGKT.

This sequence belongs to the LpxK family.

It carries out the reaction a lipid A disaccharide + ATP = a lipid IVA + ADP + H(+). It participates in glycolipid biosynthesis; lipid IV(A) biosynthesis; lipid IV(A) from (3R)-3-hydroxytetradecanoyl-[acyl-carrier-protein] and UDP-N-acetyl-alpha-D-glucosamine: step 6/6. Functionally, transfers the gamma-phosphate of ATP to the 4'-position of a tetraacyldisaccharide 1-phosphate intermediate (termed DS-1-P) to form tetraacyldisaccharide 1,4'-bis-phosphate (lipid IVA). The protein is Tetraacyldisaccharide 4'-kinase of Methylobacterium radiotolerans (strain ATCC 27329 / DSM 1819 / JCM 2831 / NBRC 15690 / NCIMB 10815 / 0-1).